The primary structure comprises 506 residues: Maturase K (506 aa).

This sequence belongs to the intron maturase 2 family. MatK subfamily.

The protein localises to the plastid. It localises to the chloroplast. Functionally, usually encoded in the trnK tRNA gene intron. Probably assists in splicing its own and other chloroplast group II introns. In Ocimum basilicum (Sweet basil), this protein is Maturase K.